Reading from the N-terminus, the 176-residue chain is Inner membrane-spanning protein YciB (176 aa).

6 consecutive transmembrane segments (helical) span residues 3 to 23 (FLFDLFPIILFFVAFKVWGIF), 24 to 44 (TATAVAIVATLAQVAWVAFRH), 49 to 69 (TMLWVSLGVIVVFGGATLVLH), 72 to 92 (KFIQWKPTVLYWLFAIGLLAA), 121 to 141 (VAWALFFAVLGVANLYVVHNF), and 149 to 169 (FKLFGTTGAMVVFIILQSLWL).

It belongs to the YciB family.

Its subcellular location is the cell inner membrane. Its function is as follows. Plays a role in cell envelope biogenesis, maintenance of cell envelope integrity and membrane homeostasis. The protein is Inner membrane-spanning protein YciB of Burkholderia orbicola (strain MC0-3).